Consider the following 160-residue polypeptide: MAVTKKPDLSDPVLRAKLAKGMGHNYYGEPAWPNDLLYMFPVVILGTFALSISLAVLAPAAMGEPANPFATPLEILPEWYFYPVFQILRVVPNKLLGVLCMAAVPVGLITVPFIESINKFQNPFRRPIASTLFLFGTATAVWLGIGAALPIDISLTLGLF.

The next 3 helical transmembrane spans lie at 36–56 (LLYM…SLAV), 95–115 (LLGV…PFIE), and 131–151 (TLFL…ALPI).

Belongs to the cytochrome b family. PetD subfamily. The 4 large subunits of the cytochrome b6-f complex are cytochrome b6, subunit IV (17 kDa polypeptide, petD), cytochrome f and the Rieske protein, while the 4 small subunits are petG, petL, petM and petN. The complex functions as a dimer.

Its subcellular location is the plastid. It is found in the chloroplast thylakoid membrane. Component of the cytochrome b6-f complex, which mediates electron transfer between photosystem II (PSII) and photosystem I (PSI), cyclic electron flow around PSI, and state transitions. The sequence is that of Cytochrome b6-f complex subunit 4 from Oltmannsiellopsis viridis (Marine flagellate).